Here is a 314-residue protein sequence, read N- to C-terminus: Dihydroorotate dehydrogenase (fumarate) (314 aa).

Residues K46, 70-74 (NSMGL), and N130 each bind substrate. 46-47 (KS) serves as a coordination point for FMN. N130 serves as a coordination point for FMN. Residues S132 and C133 each act as nucleophile in the active site. The FMN site is built by K167 and I195. 196 to 197 (NS) is a substrate binding site. Residues G224, 252 to 253 (GG), and 274 to 275 (GT) each bind FMN.

It belongs to the dihydroorotate dehydrogenase family. Type 1 subfamily. As to quaternary structure, homodimer. Requires FMN as cofactor.

It is found in the cytoplasm. It carries out the reaction (S)-dihydroorotate + fumarate = orotate + succinate. Its pathway is pyrimidine metabolism; UMP biosynthesis via de novo pathway. Its function is as follows. Catalyzes the conversion of dihydroorotate to orotate with fumarate as the electron acceptor. In Saccharomyces paradoxus (Yeast), this protein is Dihydroorotate dehydrogenase (fumarate) (URA1).